The following is a 355-amino-acid chain: D-alanine--D-alanine ligase (355 aa).

The 208-residue stretch at 143–350 folds into the ATP-grasp domain; the sequence is KTIFSNHKLP…IEQLVAKLVD (208 aa). 178–233 is an ATP binding site; it reads LKKLKFPVFVKPSNSGSSLGISKVKNESEILLALEKAWGIDPRILIEEGLEVREIE. Residues Asp-303, Glu-317, and Asn-319 each coordinate Mg(2+).

The protein belongs to the D-alanine--D-alanine ligase family. Mg(2+) is required as a cofactor. It depends on Mn(2+) as a cofactor.

The protein localises to the cytoplasm. It carries out the reaction 2 D-alanine + ATP = D-alanyl-D-alanine + ADP + phosphate + H(+). Its pathway is cell wall biogenesis; peptidoglycan biosynthesis. Functionally, cell wall formation. This Prochlorococcus marinus (strain MIT 9301) protein is D-alanine--D-alanine ligase.